The primary structure comprises 393 residues: Metal tolerance protein C2 (393 aa).

The interval 1–23 (MERSISFNPRGDNELPDDRSSDV) is disordered. At 1–113 (MERSISFNPR…VTSGNRQMKR (113 aa)) the chain is on the cytoplasmic side. The segment covering 11-21 (GDNELPDDRSS) has biased composition (basic and acidic residues). The helical transmembrane segment at 114-134 (LFLLIALNVLYSTTELSIGIF) threads the bilayer. Over 135–139 (TGRVG) the chain is Vacuolar. A helical transmembrane segment spans residues 140 to 160 (LVSDAFHLTFGCGLLTFSLFA). At 161–186 (MATSRKKPDHAYSYGYKRLEVLSAFT) the chain is on the cytoplasmic side. A helical transmembrane segment spans residues 187–207 (NALFLMFMSFSLAVEALHAFI). Over 208 to 214 (QDESEHK) the chain is Vacuolar. The helical transmembrane segment at 215-235 (HYLIVSAVTNLLVNLLGVWFF) threads the bilayer. The Cytoplasmic segment spans residues 236–259 (RNYARVNIAYRKAEDMNYHSVCLH). A helical membrane pass occupies residues 260 to 280 (VISDSIRSAGLILASWLLSLG). Residues 281–283 (VEN) are Vacuolar-facing. Residues 284-304 (AEVLCLGLVSVTVFMLVMPLF) form a helical membrane-spanning segment. Residues 305–393 (KATGGVLLQM…QDLTLQTDYT (89 aa)) are Cytoplasmic-facing.

Belongs to the cation diffusion facilitator (CDF) transporter (TC 2.A.4) family.

Its subcellular location is the vacuole membrane. Its function is as follows. Involved in sequestration of excess metal in the cytoplasm into vacuoles to maintain metal homeostasis. The chain is Metal tolerance protein C2 (MTPC2) from Arabidopsis thaliana (Mouse-ear cress).